Here is a 301-residue protein sequence, read N- to C-terminus: N-acetylmuramic acid 6-phosphate etherase (301 aa).

An SIS domain is found at 55 to 215 (IADALRAGGR…STISMVALGK (161 aa)). Glutamate 83 serves as the catalytic Proton donor. Glutamate 111 is a catalytic residue.

The protein belongs to the GCKR-like family. MurNAc-6-P etherase subfamily. In terms of assembly, homodimer.

The enzyme catalyses N-acetyl-D-muramate 6-phosphate + H2O = N-acetyl-D-glucosamine 6-phosphate + (R)-lactate. It participates in amino-sugar metabolism; 1,6-anhydro-N-acetylmuramate degradation. The protein operates within amino-sugar metabolism; N-acetylmuramate degradation. Its pathway is cell wall biogenesis; peptidoglycan recycling. Its function is as follows. Specifically catalyzes the cleavage of the D-lactyl ether substituent of MurNAc 6-phosphate, producing GlcNAc 6-phosphate and D-lactate. Together with AnmK, is also required for the utilization of anhydro-N-acetylmuramic acid (anhMurNAc) either imported from the medium or derived from its own cell wall murein, and thus plays a role in cell wall recycling. The polypeptide is N-acetylmuramic acid 6-phosphate etherase (Burkholderia lata (strain ATCC 17760 / DSM 23089 / LMG 22485 / NCIMB 9086 / R18194 / 383)).